A 313-amino-acid polypeptide reads, in one-letter code: Homoserine O-succinyltransferase (313 aa).

Residue C142 is the Acyl-thioester intermediate of the active site. Substrate contacts are provided by K163 and S192. Residue H235 is the Proton acceptor of the active site. E237 is an active-site residue. Residue R249 participates in substrate binding.

The protein belongs to the MetA family.

The protein resides in the cytoplasm. The catalysed reaction is L-homoserine + succinyl-CoA = O-succinyl-L-homoserine + CoA. The protein operates within amino-acid biosynthesis; L-methionine biosynthesis via de novo pathway; O-succinyl-L-homoserine from L-homoserine: step 1/1. Transfers a succinyl group from succinyl-CoA to L-homoserine, forming succinyl-L-homoserine. The polypeptide is Homoserine O-succinyltransferase (Vibrio atlanticus (strain LGP32) (Vibrio splendidus (strain Mel32))).